A 202-amino-acid polypeptide reads, in one-letter code: Orotate phosphoribosyltransferase (202 aa).

Residues Lys93 and 113-121 each bind 5-phospho-alpha-D-ribose 1-diphosphate; that span reads EDIITTGGS. Thr117 and Arg145 together coordinate orotate.

It belongs to the purine/pyrimidine phosphoribosyltransferase family. PyrE subfamily. In terms of assembly, homodimer. Mg(2+) serves as cofactor.

The catalysed reaction is orotidine 5'-phosphate + diphosphate = orotate + 5-phospho-alpha-D-ribose 1-diphosphate. Its pathway is pyrimidine metabolism; UMP biosynthesis via de novo pathway; UMP from orotate: step 1/2. Functionally, catalyzes the transfer of a ribosyl phosphate group from 5-phosphoribose 1-diphosphate to orotate, leading to the formation of orotidine monophosphate (OMP). The sequence is that of Orotate phosphoribosyltransferase from Campylobacter fetus subsp. fetus (strain 82-40).